Reading from the N-terminus, the 548-residue chain is Membrane protein insertase YidC (548 aa).

A helical transmembrane segment spans residues 6–26; sequence NLLIIALLFVSFMIWQAWEQD. Residues 28-52 form a disordered region; it reads NPQPQQQTTQTTTTAAGSAADQGVP. Over residues 29 to 41 the composition is skewed to low complexity; that stretch reads PQPQQQTTQTTTT. 4 helical membrane-spanning segments follow: residues 345-365, 420-440, 458-478, and 499-519; these read KFIH…TFIV, LGGC…YYML, LSAQ…MFFI, and PVIF…YYIV.

Belongs to the OXA1/ALB3/YidC family. Type 1 subfamily. As to quaternary structure, interacts with the Sec translocase complex via SecD. Specifically interacts with transmembrane segments of nascent integral membrane proteins during membrane integration.

It is found in the cell inner membrane. Its function is as follows. Required for the insertion and/or proper folding and/or complex formation of integral membrane proteins into the membrane. Involved in integration of membrane proteins that insert both dependently and independently of the Sec translocase complex, as well as at least some lipoproteins. Aids folding of multispanning membrane proteins. This Klebsiella pneumoniae (strain 342) protein is Membrane protein insertase YidC.